We begin with the raw amino-acid sequence, 273 residues long: Putative pyruvate, phosphate dikinase regulatory protein (273 aa).

153-160 (GVSRTSKT) serves as a coordination point for ADP.

Belongs to the pyruvate, phosphate/water dikinase regulatory protein family. PDRP subfamily.

It carries out the reaction N(tele)-phospho-L-histidyl/L-threonyl-[pyruvate, phosphate dikinase] + ADP = N(tele)-phospho-L-histidyl/O-phospho-L-threonyl-[pyruvate, phosphate dikinase] + AMP + H(+). The catalysed reaction is N(tele)-phospho-L-histidyl/O-phospho-L-threonyl-[pyruvate, phosphate dikinase] + phosphate + H(+) = N(tele)-phospho-L-histidyl/L-threonyl-[pyruvate, phosphate dikinase] + diphosphate. In terms of biological role, bifunctional serine/threonine kinase and phosphorylase involved in the regulation of the pyruvate, phosphate dikinase (PPDK) by catalyzing its phosphorylation/dephosphorylation. The sequence is that of Putative pyruvate, phosphate dikinase regulatory protein from Sinorhizobium medicae (strain WSM419) (Ensifer medicae).